The chain runs to 157 residues: Protein Smg homolog (157 aa).

The protein belongs to the Smg family.

This chain is Protein Smg homolog, found in Pseudoalteromonas translucida (strain TAC 125).